A 211-amino-acid chain; its full sequence is Large ribosomal subunit protein uL3 (211 aa).

The protein belongs to the universal ribosomal protein uL3 family. As to quaternary structure, part of the 50S ribosomal subunit. Forms a cluster with proteins L14 and L19.

Its function is as follows. One of the primary rRNA binding proteins, it binds directly near the 3'-end of the 23S rRNA, where it nucleates assembly of the 50S subunit. This is Large ribosomal subunit protein uL3 from Citrifermentans bemidjiense (strain ATCC BAA-1014 / DSM 16622 / JCM 12645 / Bem) (Geobacter bemidjiensis).